We begin with the raw amino-acid sequence, 345 residues long: N-acetyl-gamma-glutamyl-phosphate reductase (345 aa).

C149 is a catalytic residue.

It belongs to the NAGSA dehydrogenase family. Type 1 subfamily.

It localises to the cytoplasm. It carries out the reaction N-acetyl-L-glutamate 5-semialdehyde + phosphate + NADP(+) = N-acetyl-L-glutamyl 5-phosphate + NADPH + H(+). It participates in amino-acid biosynthesis; L-arginine biosynthesis; N(2)-acetyl-L-ornithine from L-glutamate: step 3/4. Catalyzes the NADPH-dependent reduction of N-acetyl-5-glutamyl phosphate to yield N-acetyl-L-glutamate 5-semialdehyde. This chain is N-acetyl-gamma-glutamyl-phosphate reductase, found in Bacillus subtilis (strain 168).